Here is a 459-residue protein sequence, read N- to C-terminus: Exodeoxyribonuclease 7 large subunit (459 aa).

This sequence belongs to the XseA family. In terms of assembly, heterooligomer composed of large and small subunits.

Its subcellular location is the cytoplasm. It carries out the reaction Exonucleolytic cleavage in either 5'- to 3'- or 3'- to 5'-direction to yield nucleoside 5'-phosphates.. Functionally, bidirectionally degrades single-stranded DNA into large acid-insoluble oligonucleotides, which are then degraded further into small acid-soluble oligonucleotides. The sequence is that of Exodeoxyribonuclease 7 large subunit from Pseudomonas savastanoi pv. phaseolicola (strain 1448A / Race 6) (Pseudomonas syringae pv. phaseolicola (strain 1448A / Race 6)).